The primary structure comprises 166 residues: Urease accessory protein UreE (166 aa).

The disordered stretch occupies residues 135–156 (EQGAYGGGHHHSHHGDEEFNYG).

It belongs to the UreE family.

It localises to the cytoplasm. Involved in urease metallocenter assembly. Binds nickel. Probably functions as a nickel donor during metallocenter assembly. The sequence is that of Urease accessory protein UreE from Ectopseudomonas mendocina (strain ymp) (Pseudomonas mendocina).